The sequence spans 642 residues: Threonine--tRNA ligase (642 aa).

The TGS domain maps to 1–61 (MPVITLPDGS…ETDAELSIIT (61 aa)). The tract at residues 243–534 (DHRKIGKQLD…LIEEYAGRFP (292 aa)) is catalytic. Zn(2+)-binding residues include C334, H385, and H511.

Belongs to the class-II aminoacyl-tRNA synthetase family. As to quaternary structure, homodimer. Requires Zn(2+) as cofactor.

It is found in the cytoplasm. The enzyme catalyses tRNA(Thr) + L-threonine + ATP = L-threonyl-tRNA(Thr) + AMP + diphosphate + H(+). Functionally, catalyzes the attachment of threonine to tRNA(Thr) in a two-step reaction: L-threonine is first activated by ATP to form Thr-AMP and then transferred to the acceptor end of tRNA(Thr). Also edits incorrectly charged L-seryl-tRNA(Thr). This Shewanella baltica (strain OS155 / ATCC BAA-1091) protein is Threonine--tRNA ligase.